The chain runs to 191 residues: Protein GrpE (191 aa).

The segment covering 1–15 (MGKEEKNNIEDKALD) has biased composition (basic and acidic residues). Positions 1-35 (MGKEEKNNIEDKALDNEQEMDQESTSKAVEELSIE) are disordered.

Belongs to the GrpE family. In terms of assembly, homodimer.

The protein resides in the cytoplasm. Participates actively in the response to hyperosmotic and heat shock by preventing the aggregation of stress-denatured proteins, in association with DnaK and GrpE. It is the nucleotide exchange factor for DnaK and may function as a thermosensor. Unfolded proteins bind initially to DnaJ; upon interaction with the DnaJ-bound protein, DnaK hydrolyzes its bound ATP, resulting in the formation of a stable complex. GrpE releases ADP from DnaK; ATP binding to DnaK triggers the release of the substrate protein, thus completing the reaction cycle. Several rounds of ATP-dependent interactions between DnaJ, DnaK and GrpE are required for fully efficient folding. The polypeptide is Protein GrpE (Francisella philomiragia subsp. philomiragia (strain ATCC 25017 / CCUG 19701 / FSC 153 / O#319-036)).